Here is a 569-residue protein sequence, read N- to C-terminus: Endonuclease/exonuclease/phosphatase family domain-containing protein 1 (569 aa).

The disordered stretch occupies residues 1 to 20 (MGSTLGCHRSIPRDPSDLSH). G2 carries N-myristoyl glycine lipidation. Residues 11–20 (IPRDPSDLSH) are compositionally biased toward basic and acidic residues. Phosphoserine occurs at positions 16, 21, and 25. The 30-residue stretch at 38-67 (ERLNINTATEEELMTLPGVTRAVARSIVEY) folds into the HhH domain. Residues S106, S110, S160, and S173 each carry the phosphoserine modification. Residues 200–225 (SRPPSTHTNGGLTFTAKPHPSPTSLS) form a disordered region. Over residues 202-211 (PPSTHTNGGL) the composition is skewed to polar residues. A Phosphothreonine modification is found at T265. S428 is subject to Phosphoserine. Positions 545–569 (SKKDAPRNGSGVALERSEANIKHER) are disordered. A compositionally biased stretch (basic and acidic residues) spans 559–569 (ERSEANIKHER).

In Homo sapiens (Human), this protein is Endonuclease/exonuclease/phosphatase family domain-containing protein 1 (EEPD1).